A 201-amino-acid polypeptide reads, in one-letter code: Small ribosomal subunit protein uS4c (201 aa).

The segment at 20–44 (GLTSKRPRAGSDLRNQSRSGKKSQY) is disordered. The S4 RNA-binding domain maps to 89–152 (MRLDNTLFRL…NSRTLVQNLL (64 aa)).

It belongs to the universal ribosomal protein uS4 family. As to quaternary structure, part of the 30S ribosomal subunit. Contacts protein S5. The interaction surface between S4 and S5 is involved in control of translational fidelity.

It localises to the plastid. It is found in the chloroplast. One of the primary rRNA binding proteins, it binds directly to 16S rRNA where it nucleates assembly of the body of the 30S subunit. Functionally, with S5 and S12 plays an important role in translational accuracy. This Aethionema grandiflorum (Persian stone-cress) protein is Small ribosomal subunit protein uS4c (rps4).